The chain runs to 76 residues: Small ribosomal subunit protein bS18 (76 aa).

This sequence belongs to the bacterial ribosomal protein bS18 family. Part of the 30S ribosomal subunit. Forms a tight heterodimer with protein bS6.

Binds as a heterodimer with protein bS6 to the central domain of the 16S rRNA, where it helps stabilize the platform of the 30S subunit. The polypeptide is Small ribosomal subunit protein bS18 (Oceanobacillus iheyensis (strain DSM 14371 / CIP 107618 / JCM 11309 / KCTC 3954 / HTE831)).